The chain runs to 209 residues: Redox-sensing transcriptional repressor Rex (209 aa).

The segment at residues 16-55 (LYYRFIQNLSLSGKQRVSSAELSEAVKVDSATIRRDFSYF) is a DNA-binding region (H-T-H motif). 90–95 (GVGNLG) contributes to the NAD(+) binding site.

The protein belongs to the transcriptional regulatory Rex family. In terms of assembly, homodimer.

The protein localises to the cytoplasm. Its function is as follows. Modulates transcription in response to changes in cellular NADH/NAD(+) redox state. This is Redox-sensing transcriptional repressor Rex from Bacillus cereus (strain ATCC 10987 / NRS 248).